Here is a 424-residue protein sequence, read N- to C-terminus: Glutamyl-tRNA reductase (424 aa).

Substrate is bound by residues 49–52 (TCNR), serine 109, 114–116 (EDQ), and glutamine 120. Catalysis depends on cysteine 50, which acts as the Nucleophile. 189-194 (GFGKMS) provides a ligand contact to NADP(+).

Belongs to the glutamyl-tRNA reductase family. In terms of assembly, homodimer.

The enzyme catalyses (S)-4-amino-5-oxopentanoate + tRNA(Glu) + NADP(+) = L-glutamyl-tRNA(Glu) + NADPH + H(+). It functions in the pathway porphyrin-containing compound metabolism; protoporphyrin-IX biosynthesis; 5-aminolevulinate from L-glutamyl-tRNA(Glu): step 1/2. Its function is as follows. Catalyzes the NADPH-dependent reduction of glutamyl-tRNA(Glu) to glutamate 1-semialdehyde (GSA). This Alkaliphilus metalliredigens (strain QYMF) protein is Glutamyl-tRNA reductase.